A 493-amino-acid chain; its full sequence is Glutamyl-tRNA(Gln) amidotransferase subunit A (493 aa).

Catalysis depends on charge relay system residues lysine 81 and serine 156. Serine 180 (acyl-ester intermediate) is an active-site residue.

It belongs to the amidase family. GatA subfamily. As to quaternary structure, heterotrimer of A, B and C subunits.

The catalysed reaction is L-glutamyl-tRNA(Gln) + L-glutamine + ATP + H2O = L-glutaminyl-tRNA(Gln) + L-glutamate + ADP + phosphate + H(+). Functionally, allows the formation of correctly charged Gln-tRNA(Gln) through the transamidation of misacylated Glu-tRNA(Gln) in organisms which lack glutaminyl-tRNA synthetase. The reaction takes place in the presence of glutamine and ATP through an activated gamma-phospho-Glu-tRNA(Gln). The polypeptide is Glutamyl-tRNA(Gln) amidotransferase subunit A (Mycobacterium ulcerans (strain Agy99)).